The following is a 211-amino-acid chain: Protein-L-isoaspartate O-methyltransferase (211 aa).

Ser-62 is an active-site residue.

Belongs to the methyltransferase superfamily. L-isoaspartyl/D-aspartyl protein methyltransferase family.

It localises to the cytoplasm. It carries out the reaction [protein]-L-isoaspartate + S-adenosyl-L-methionine = [protein]-L-isoaspartate alpha-methyl ester + S-adenosyl-L-homocysteine. Its function is as follows. Catalyzes the methyl esterification of L-isoaspartyl residues in peptides and proteins that result from spontaneous decomposition of normal L-aspartyl and L-asparaginyl residues. It plays a role in the repair and/or degradation of damaged proteins. This is Protein-L-isoaspartate O-methyltransferase from Shewanella sp. (strain ANA-3).